A 159-amino-acid polypeptide reads, in one-letter code: Ribosomal RNA large subunit methyltransferase H (159 aa).

Residues L76, G107, and 126–131 (LSSLTL) contribute to the S-adenosyl-L-methionine site.

The protein belongs to the RNA methyltransferase RlmH family. As to quaternary structure, homodimer.

The protein localises to the cytoplasm. The catalysed reaction is pseudouridine(1915) in 23S rRNA + S-adenosyl-L-methionine = N(3)-methylpseudouridine(1915) in 23S rRNA + S-adenosyl-L-homocysteine + H(+). Specifically methylates the pseudouridine at position 1915 (m3Psi1915) in 23S rRNA. The polypeptide is Ribosomal RNA large subunit methyltransferase H (Cupriavidus pinatubonensis (strain JMP 134 / LMG 1197) (Cupriavidus necator (strain JMP 134))).